The primary structure comprises 481 residues: MREYEAVIGLEVHVELKTNTKIFCNCSTEFGGDPNSHVCPVCLGLPGVLPVLNKKVVDYAIKAALALNCEVAEYCKFDRKNYYYPDLPKNYQISQYDLPLAKNGYLEIEVDGQVKRIGITRIHMEEDAGKLVHQGNLAVTPYSLVDYNRTGVPLIEIVSAPDIRTPEEARLYLEKLKAIIQYTGISDCRMEEGSLRCDANVSVRPKGQKEFGTKTEIKNMNSFKALQKALEYEIARQIEILEEGGRIIQETRMWDESRQVTLSMRSKEEAHDYRYFPEPDLPPVVIDREWLEEIRATLPELPDARKKRFVEQYGLTPYDAHVLTLTRELADYYEEAAKGYSNPKAVANWVINELLRLLNAAGKEITECPIKPEQITKMLELLDKGTISGKIAKTVFEEMFSSGKDPEVIVKEKGLVQITDLGELEAVVDKVIAANPKAVEDYKNGKEKALGFLVGQIMKETRGRANPEAVNQLLRDKLAKL.

It belongs to the GatB/GatE family. GatB subfamily. Heterotrimer of A, B and C subunits.

It catalyses the reaction L-glutamyl-tRNA(Gln) + L-glutamine + ATP + H2O = L-glutaminyl-tRNA(Gln) + L-glutamate + ADP + phosphate + H(+). The enzyme catalyses L-aspartyl-tRNA(Asn) + L-glutamine + ATP + H2O = L-asparaginyl-tRNA(Asn) + L-glutamate + ADP + phosphate + 2 H(+). Its function is as follows. Allows the formation of correctly charged Asn-tRNA(Asn) or Gln-tRNA(Gln) through the transamidation of misacylated Asp-tRNA(Asn) or Glu-tRNA(Gln) in organisms which lack either or both of asparaginyl-tRNA or glutaminyl-tRNA synthetases. The reaction takes place in the presence of glutamine and ATP through an activated phospho-Asp-tRNA(Asn) or phospho-Glu-tRNA(Gln). The chain is Aspartyl/glutamyl-tRNA(Asn/Gln) amidotransferase subunit B from Carboxydothermus hydrogenoformans (strain ATCC BAA-161 / DSM 6008 / Z-2901).